Consider the following 241-residue polypeptide: tRNA pseudouridine synthase B (241 aa).

Catalysis depends on D45, which acts as the Nucleophile.

Belongs to the pseudouridine synthase TruB family. Type 1 subfamily.

The catalysed reaction is uridine(55) in tRNA = pseudouridine(55) in tRNA. In terms of biological role, responsible for synthesis of pseudouridine from uracil-55 in the psi GC loop of transfer RNAs. The chain is tRNA pseudouridine synthase B from Opitutus terrae (strain DSM 11246 / JCM 15787 / PB90-1).